Here is a 198-residue protein sequence, read N- to C-terminus: Nucleoid occlusion factor SlmA (198 aa).

The HTH tetR-type domain maps to 10–70; the sequence is NRREEILQSL…SLIEFIEDSL (61 aa). The H-T-H motif DNA-binding region spans 33-52; sequence TTAKLAASVGVSEAALYRHF. Positions 117-144 form a coiled coil; that stretch reads EQDRLQGRINQLFERIEAQLRQVLREKR.

The protein belongs to the nucleoid occlusion factor SlmA family. Homodimer. Interacts with FtsZ.

The protein localises to the cytoplasm. The protein resides in the nucleoid. Its function is as follows. Required for nucleoid occlusion (NO) phenomenon, which prevents Z-ring formation and cell division over the nucleoid. Acts as a DNA-associated cell division inhibitor that binds simultaneously chromosomal DNA and FtsZ, and disrupts the assembly of FtsZ polymers. SlmA-DNA-binding sequences (SBS) are dispersed on non-Ter regions of the chromosome, preventing FtsZ polymerization at these regions. The chain is Nucleoid occlusion factor SlmA from Citrobacter koseri (strain ATCC BAA-895 / CDC 4225-83 / SGSC4696).